Consider the following 227-residue polypeptide: MAFLILLRHGKSVWNEKNLFTGWVDIPLSQKGIDEAMLAGEAIKDLPIDCIFTSSLVRSLMTALLAMTHHNSKKIPYIVHDDPEQKHMSKIYSDEVNHMIPLYRSSALNERMYGELQGKNKKKTAEQFGEEQVKLWRRSYKTAPPNGESLYDTGQRTIPYFQETIFPLLQNSKNVFVSAHGNSLRSLIMDIEKLSEEEVHSLELPTGKPIVYLWTGHTFERHPELFG.

Substrate contacts are provided by residues 8–15 (RHGKSVWN), 21–22 (TG), Arg-58, 110–113 (ERMY), Lys-121, 137–138 (RR), and 181–182 (GN). Catalysis depends on His-9, which acts as the Tele-phosphohistidine intermediate. Glu-110 serves as the catalytic Proton donor/acceptor.

Belongs to the phosphoglycerate mutase family. BPG-dependent PGAM subfamily.

The catalysed reaction is (2R)-2-phosphoglycerate = (2R)-3-phosphoglycerate. The protein operates within carbohydrate degradation; glycolysis; pyruvate from D-glyceraldehyde 3-phosphate: step 3/5. Its function is as follows. Catalyzes the interconversion of 2-phosphoglycerate and 3-phosphoglycerate. The polypeptide is 2,3-bisphosphoglycerate-dependent phosphoglycerate mutase (Chlamydia abortus (strain DSM 27085 / S26/3) (Chlamydophila abortus)).